Here is a 453-residue protein sequence, read N- to C-terminus: Serine/threonine-protein phosphatase 2A regulatory subunit B'' subunit gamma (453 aa).

EF-hand domains follow at residues 273 to 308 (PSALRVYGQYLNLDKDHNGMLSKEELSRYGTATMTN) and 341 to 376 (KEPAALQYIFKLLDIENKGYLNVFSLNYFFRAIQEL). Ca(2+)-binding residues include Asp-286, Asp-288, Asn-290, Met-292, and Glu-297.

Interacts with MCM3AP/GANP, PPP5C, and the phosphatase 2A core enzyme composed of the PPP2CA catalytic subunit and the constant regulatory subunit PPP2R1A. Finds in a complex with ABCB1, TFPI2 and PPP2R3C; leading to the dephosphorylation of ABCB1. Expressed in all tissues tested including heart, brain, spleen, thymus, lung, liver, kidney and testis.

Its subcellular location is the nucleus. It is found in the cytoplasm. Its function is as follows. May regulate MCM3AP phosphorylation through phosphatase recruitment. May act as a negative regulator of ABCB1 expression and function through the dephosphorylation of ABCB1 by TFPI2/PPP2R3C complex. May play a role in the activation-induced cell death of B-cells. The polypeptide is Serine/threonine-protein phosphatase 2A regulatory subunit B'' subunit gamma (Ppp2r3c) (Mus musculus (Mouse)).